Reading from the N-terminus, the 926-residue chain is Isoleucine--tRNA ligase (926 aa).

The 'HIGH' region motif lies at Pro-57–His-67. Position 555 (Glu-555) interacts with L-isoleucyl-5'-AMP. The short motif at Lys-596 to Ser-600 is the 'KMSKS' region element. Lys-599 provides a ligand contact to ATP. The Zn(2+) site is built by Cys-897, Cys-900, Cys-914, and Cys-917.

It belongs to the class-I aminoacyl-tRNA synthetase family. IleS type 1 subfamily. As to quaternary structure, monomer. The cofactor is Zn(2+).

It is found in the cytoplasm. The enzyme catalyses tRNA(Ile) + L-isoleucine + ATP = L-isoleucyl-tRNA(Ile) + AMP + diphosphate. Its function is as follows. Catalyzes the attachment of isoleucine to tRNA(Ile). As IleRS can inadvertently accommodate and process structurally similar amino acids such as valine, to avoid such errors it has two additional distinct tRNA(Ile)-dependent editing activities. One activity is designated as 'pretransfer' editing and involves the hydrolysis of activated Val-AMP. The other activity is designated 'posttransfer' editing and involves deacylation of mischarged Val-tRNA(Ile). This is Isoleucine--tRNA ligase from Natranaerobius thermophilus (strain ATCC BAA-1301 / DSM 18059 / JW/NM-WN-LF).